A 1297-amino-acid chain; its full sequence is Probable bifunctional E2/E3 enzyme R795 (1297 aa).

The RING-type; atypical zinc finger occupies 74-128 (CAICRYQENEPCIEHKSSESNTKCPIAQSVSCSHSFHACCISRWLHTKKTCPLCN). The region spanning 678-750 (EPLQEFLCPI…RDWKENNTVI (73 aa)) is the U-box domain. The VWFA domain maps to 899–1082 (EMTLEIHSSN…LDIMELETMI (184 aa)). Residues 1133 to 1279 (QKLIRVQREI…IIDYVNKFAL (147 aa)) form the UBC core domain. Cys1217 (glycyl thioester intermediate) is an active-site residue.

The protein in the C-terminal section; belongs to the ubiquitin-conjugating enzyme family.

The catalysed reaction is S-ubiquitinyl-[E2 ubiquitin-conjugating enzyme]-L-cysteine + [acceptor protein]-L-lysine = [E2 ubiquitin-conjugating enzyme]-L-cysteine + N(6)-ubiquitinyl-[acceptor protein]-L-lysine.. It carries out the reaction S-ubiquitinyl-[E1 ubiquitin-activating enzyme]-L-cysteine + [E2 ubiquitin-conjugating enzyme]-L-cysteine = [E1 ubiquitin-activating enzyme]-L-cysteine + S-ubiquitinyl-[E2 ubiquitin-conjugating enzyme]-L-cysteine.. Its pathway is protein modification; protein ubiquitination. In terms of biological role, catalyzes the covalent attachment of ubiquitin to other proteins. Also acts as an E3 ubiquitin-protein ligase. This chain is Probable bifunctional E2/E3 enzyme R795, found in Acanthamoeba polyphaga (Amoeba).